We begin with the raw amino-acid sequence, 180 residues long: Inner membrane-spanning protein YciB (180 aa).

Helical transmembrane passes span 4–24, 25–45, 52–72, 76–96, 118–138, and 150–170; these read LLSE…GGGI, QHAT…CYVI, LSII…ISGN, IKIK…MSGI, ITLS…NEVV, and FKVF…LPLL.

It belongs to the YciB family.

Its subcellular location is the cell inner membrane. In terms of biological role, plays a role in cell envelope biogenesis, maintenance of cell envelope integrity and membrane homeostasis. In Rickettsia massiliae (strain Mtu5), this protein is Inner membrane-spanning protein YciB.